A 118-amino-acid chain; its full sequence is Small ribosomal subunit protein uS13 (118 aa).

The segment at 94–118 is disordered; it reads GLPVRGQRTKTNARTRKGPRKPIKK.

This sequence belongs to the universal ribosomal protein uS13 family. In terms of assembly, part of the 30S ribosomal subunit. Forms a loose heterodimer with protein S19. Forms two bridges to the 50S subunit in the 70S ribosome.

Functionally, located at the top of the head of the 30S subunit, it contacts several helices of the 16S rRNA. In the 70S ribosome it contacts the 23S rRNA (bridge B1a) and protein L5 of the 50S subunit (bridge B1b), connecting the 2 subunits; these bridges are implicated in subunit movement. Contacts the tRNAs in the A and P-sites. This is Small ribosomal subunit protein uS13 from Pasteurella multocida (strain Pm70).